Reading from the N-terminus, the 722-residue chain is PAB1-binding protein 1 (722 aa).

Basic and acidic residues predominate over residues 1-10 (MKGNFRKRDS). A disordered region spans residues 1–38 (MKGNFRKRDSSTNSRKGGNSDSNYTNGGVPNQNNSSMF). Residues 11 to 38 (STNSRKGGNSDSNYTNGGVPNQNNSSMF) are compositionally biased toward polar residues. A Sm domain is found at 51-107 (RQDYLLANSIGSDVTVTVTSGVKYTGLLVSCNLESTNGIDVVLRFPRVADSGVSDSV). Ser-106 carries the phosphoserine modification. Thr-193 carries the phosphothreonine modification. Ser-215 carries the phosphoserine modification. 3 disordered regions span residues 305-380 (ALKS…LSSK), 412-488 (SSTL…NPHT), and 683-722 (GSGP…SGHK). Low complexity-rich tracts occupy residues 307-316 (KSNSKPNSNK), 338-347 (SSSNSNKNEN), 356-370 (PAAA…PQKT), and 412-421 (SSTLKSNSSL). A Glycyl lysine isopeptide (Lys-Gly) (interchain with G-Cter in ubiquitin) cross-link involves residue Lys-344. A compositionally biased stretch (polar residues) spans 429–455 (TPSAKTVSPTTQISAGKSESRRSGSNI). A Phosphoserine modification is found at Ser-436. The span at 456–471 (SQGQSSTGHTTRSSTS) shows a compositional bias: low complexity. Residues 698 to 722 (SHGHSRNYHQTSHHGHHNSSTSGHK) show a composition bias toward basic residues.

Belongs to the ataxin-2 family. Interacts (via C-terminus) with MKT1 (via C-terminus). Interacts with FIR1, IGO1, LSM12, PBP4 and PAB1.

It is found in the cytoplasm. The protein resides in the nucleus. The protein localises to the mitochondrion. Involved in pre-mRNA polyadenylation. May act to repress the ability of PAB1 to negatively regulate polyadenylation. Negative regulator of poly(A) nuclease (PAN) activity. Promotes mating-type switching in mother cells by positively regulating HO mRNA translation. Localizes MKT1 to polysomes. The polypeptide is PAB1-binding protein 1 (PBP1) (Saccharomyces cerevisiae (strain ATCC 204508 / S288c) (Baker's yeast)).